The chain runs to 306 residues: F-box/LRR-repeat protein At3g26922 (306 aa).

An F-box domain is found at glutamate 13–isoleucine 73. LRR repeat units lie at residues aspartate 67–phenylalanine 93, cysteine 98–valine 122, cysteine 138–asparagine 170, valine 171–arginine 196, leucine 215–glycine 243, and isoleucine 263–leucine 288.

The sequence is that of F-box/LRR-repeat protein At3g26922 from Arabidopsis thaliana (Mouse-ear cress).